We begin with the raw amino-acid sequence, 157 residues long: Stalk-specific protein B (157 aa).

The signal sequence occupies residues 1 to 19 (MRSILILLSLLLTIAFASA).

It is found in the secreted. This is Stalk-specific protein B (staB) from Dictyostelium discoideum (Social amoeba).